Here is a 191-residue protein sequence, read N- to C-terminus: UPF0312 protein Shewana3_1179 (191 aa).

The N-terminal stretch at 1–22 is a signal peptide; that stretch reads MKKQLLAALIGGSLLAPMAASA.

Belongs to the UPF0312 family. Type 1 subfamily.

Its subcellular location is the periplasm. This is UPF0312 protein Shewana3_1179 from Shewanella sp. (strain ANA-3).